The chain runs to 131 residues: Large ribosomal subunit protein bL20 (131 aa).

The protein belongs to the bacterial ribosomal protein bL20 family.

Its function is as follows. Binds directly to 23S ribosomal RNA and is necessary for the in vitro assembly process of the 50S ribosomal subunit. It is not involved in the protein synthesizing functions of that subunit. The chain is Large ribosomal subunit protein bL20 from Mycolicibacterium paratuberculosis (strain ATCC BAA-968 / K-10) (Mycobacterium paratuberculosis).